An 833-amino-acid polypeptide reads, in one-letter code: A disintegrin and metalloproteinase with thrombospondin motifs 4 (833 aa).

The N-terminal stretch at 1–49 is a signal peptide; it reads MSQMGLHPRRGLTGHWLQRFQPCLPLHTVQWRRLLLLAFLLSLAWPASP. The propeptide occupies 50-208; that stretch reads LPREEEIVFP…PSPISRRTKR (159 aa). N63 carries N-linked (GlcNAc...) asparagine glycosylation. Residues 180–204 form a disordered region; that stretch reads KSPASSQGPMCTVKAPSGSPSPISR. Positions 188–195 match the Cysteine switch motif; sequence PMCTVKAP. C190 provides a ligand contact to Zn(2+). In terms of domain architecture, Peptidase M12B spans 214-424; it reads RFVETLVVAD…GYGHCLLDKP (211 aa). Disulfide bonds link C289-C341, C318-C323, C335-C419, C373-C403, C445-C468, C456-C478, C463-C497, C491-C502, C528-C565, C532-C570, and C543-C555. A glycan (N-linked (GlcNAc...) asparagine) is linked at N299. H357 lines the Zn(2+) pocket. E358 is a catalytic residue. H361 and H367 together coordinate Zn(2+). The Disintegrin domain maps to 433-515; that stretch reads TFPGKDYDAD…DQLKDFNVPQ (83 aa). Residues 516–571 enclose the TSP type-1 domain; that stretch reads AGGWGPWGPWGDCSRTCGGGVQFSSRDCTRPVPRNGGKYCEGRRTRFRSCNTENCP. Residues 682 to 833 form a spacer region; the sequence is SKQSGSFKKF…LRKRPWAGRK (152 aa).

Interacts with SRPX2. Zn(2+) serves as cofactor. In terms of processing, the precursor is cleaved by a furin endopeptidase. Post-translationally, glycosylated. Can be O-fucosylated by POFUT2 on a serine or a threonine residue found within the consensus sequence C1-X(2)-(S/T)-C2-G of the TSP type-1 repeat domains where C1 and C2 are the first and second cysteine residue of the repeat, respectively. Fucosylated repeats can then be further glycosylated by the addition of a beta-1,3-glucose residue by the glucosyltransferase, B3GALTL. Fucosylation mediates the efficient secretion of ADAMTS family members. Can also be C-glycosylated with one or two mannose molecules on tryptophan residues within the consensus sequence W-X-X-W of the TPRs, and N-glycosylated. These other glycosylations can also facilitate secretion.

It is found in the secreted. The protein localises to the extracellular space. It localises to the extracellular matrix. The catalysed reaction is Glutamyl endopeptidase. Bonds cleaved include 370-Thr-Glu-Gly-Glu-|-Ala-Arg-Gly-Ser-377 in the interglobular domain of mammalian aggrecan.. Its function is as follows. Cleaves aggrecan, a cartilage proteoglycan, at the '392-Glu-|-Ala-393' site and may be involved in its turnover. Also cleaves COMP. May play an important role in the destruction of aggrecan in arthritic diseases. In Mus musculus (Mouse), this protein is A disintegrin and metalloproteinase with thrombospondin motifs 4 (Adamts4).